The following is a 1005-amino-acid chain: Pikachurin (1005 aa).

Positions 1–24 are cleaved as a signal peptide; it reads MDLISTFLLHFLLLACSLPPGAVS. Fibronectin type-III domains follow at residues 37–136 and 144–239; these read PPLD…TLSQ and APHQ…TLGP. N47 is a glycosylation site (N-linked (GlcNAc...) asparagine). Residues 281–328 form a disordered region; it reads PATKVGNKKSKKTSVSNSEMDSRLAQPTSASLPETTVAVPPTPAQRKG. The span at 305–314 shows a compositional bias: polar residues; it reads AQPTSASLPE. Residues 339-377 enclose the EGF-like 1 domain; it reads FDMSCDETLCSADSFCVNDYAWGGSRCHCNLGKGGEACS. 11 disulfides stabilise this stretch: C343-C354, C348-C365, C367-C376, C530-C560, C565-C576, C570-C586, C588-C597, C784-C795, C789-C804, C806-C815, and C975-C1002. A Laminin G-like 1 domain is found at 382–560; sequence IQYPQFFGHS…ALNGADVGEC (179 aa). EGF-like domains follow at residues 561-598 and 780-816; these read SSGICDEASCINGGTCAAIKADSYICLCPLGFRGRHCE and AAHPCVGAPCAHGGSCRPRKEGYECDCPLGFEGLNCQ. Residues 605–784 enclose the Laminin G-like 2 domain; the sequence is IPQFRESLRS…VNVENAAHPC (180 aa). The region spanning 823–1002 is the Laminin G-like 3 domain; sequence IEIPQFIGRS…AVDGKNINTC (180 aa).

Interacts with DAG1 alpha-dystroglycan. Interacts with GPR158 and GPR179; transsynaptic interaction is required for synaptic organization of photoreceptor cells. O-glycosylated; contains chondroitin sulfate and heparan sulfate.

Its subcellular location is the secreted. The protein localises to the extracellular space. It is found in the extracellular matrix. The protein resides in the synaptic cleft. It localises to the presynaptic active zone. Involved in both the retinal photoreceptor ribbon synapse formation and physiological functions of visual perception. Plays a key role in the synaptic organization of photoreceptors by mediating transsynaptic interaction between alpha-dystroglycan and GPR179 on the postsynaptic membrane. Necessary for proper bipolar dendritic tip apposition to the photoreceptor ribbon synapse. Promotes matrix assembly and cell adhesiveness. The polypeptide is Pikachurin (Egflam) (Rattus norvegicus (Rat)).